A 305-amino-acid polypeptide reads, in one-letter code: Ribonucleoside-diphosphate reductase small subunit (305 aa).

Fe cation contacts are provided by Glu64, Glu94, and His97. The active site involves Tyr101. A helical membrane pass occupies residues 150-170; sequence VLIFYLIEGVFFISSFYCIGL. Fe cation contacts are provided by Glu157, Glu191, and His194.

This sequence belongs to the ribonucleoside diphosphate reductase small chain family. As to quaternary structure, heterotetramer composed of a homodimer of the large subunit (R1) and a homodimer of the small subunit (R2). Larger multisubunit protein complex are also active, composed of (R1)n(R2)n. Requires Fe cation as cofactor.

It localises to the host membrane. The catalysed reaction is a 2'-deoxyribonucleoside 5'-diphosphate + [thioredoxin]-disulfide + H2O = a ribonucleoside 5'-diphosphate + [thioredoxin]-dithiol. In terms of biological role, ribonucleoside-diphosphate reductase holoenzyme provides the precursors necessary for viral DNA synthesis. Allows virus growth in non-dividing cells, as well as reactivation from latency in infected hosts. Catalyzes the biosynthesis of deoxyribonucleotides from the corresponding ribonucleotides. The polypeptide is Ribonucleoside-diphosphate reductase small subunit (Alcelaphine herpesvirus 1 (strain C500) (AlHV-1)).